Here is a 364-residue protein sequence, read N- to C-terminus: MKTIGGKVFRHAAILAACVLPLWCQPALAERIKDLASIQGVRSNQLIGYGIVVGLDNTGDQTTQTPFTTQAMSNMLSQLGVNLTQEQSQKLQLKNVAAAMVTANLPSFSRPGQPIDVTVSSMGNAKSLRGGTLLMTQLKGADGQVYAIAQGNVLVGGVGASSGGSKVTVNHLSAGRIPGGATVERAVPTAVGQGGVVYYELANSDFGTVQKVVDAINRTAGAGTAQAVDGRRMVVKVPEDADSRVSFLGRIENLDVQPVAGVAKVVINPRTGSVVMNQKVTLDACAVAHGSLSVVVDAGQPQFGQAADIQVKQDNGSLMNVKAGANLADVVKALNALGANPLDLLAILQAMKAAGALRADLEVI.

The first 29 residues, 1 to 29 (MKTIGGKVFRHAAILAACVLPLWCQPALA), serve as a signal peptide directing secretion.

The protein belongs to the FlgI family. The basal body constitutes a major portion of the flagellar organelle and consists of four rings (L,P,S, and M) mounted on a central rod.

It localises to the periplasm. Its subcellular location is the bacterial flagellum basal body. In terms of biological role, assembles around the rod to form the L-ring and probably protects the motor/basal body from shearing forces during rotation. The polypeptide is Flagellar P-ring protein (Dechloromonas aromatica (strain RCB)).